We begin with the raw amino-acid sequence, 113 residues long: U11-theraphotoxin-Hhn1a (113 aa).

The first 21 residues, 1 to 21 (MNTVRVTFLLVFVLAVSLGQA), serve as a signal peptide directing secretion. Positions 22-74 (DKDENRMEMQEKTEQGKSYLDFAENLLLQKLEELEAKLLEEDSEESRNSRQRR) are excised as a propeptide. The tract at residues 61 to 83 (EEDSEESRNSRQRRCIGEGVPCD) is disordered. Cystine bridges form between Cys-75/Cys-90, Cys-82/Cys-95, and Cys-89/Cys-110.

The protein belongs to the neurotoxin 14 (magi-1) family. 01 (HNTX-16) subfamily. Expressed by the venom gland.

It localises to the secreted. In terms of biological role, probable ion channel inhibitor. This Cyriopagopus hainanus (Chinese bird spider) protein is U11-theraphotoxin-Hhn1a.